The primary structure comprises 67 residues: Large ribosomal subunit protein uL30 (67 aa).

The protein belongs to the universal ribosomal protein uL30 family. As to quaternary structure, part of the 50S ribosomal subunit.

This chain is Large ribosomal subunit protein uL30, found in Hamiltonella defensa subsp. Acyrthosiphon pisum (strain 5AT).